The chain runs to 375 residues: Growth/differentiation factor 8 (375 aa).

Residues 1 to 18 (MQKLQISVYIYLFVLILA) form the signal peptide. The propeptide occupies 19 to 266 (GPVDLNENSE…VTDTPKRSRR (248 aa)). N-linked (GlcNAc...) asparagine glycosylation is present at Asn-71. Cystine bridges form between Cys-272–Cys-282, Cys-281–Cys-340, Cys-309–Cys-372, and Cys-313–Cys-374.

The protein belongs to the TGF-beta family. Homodimer; disulfide-linked. Interacts with WFIKKN2, leading to inhibit its activity. Interacts with FSTL3. In terms of processing, synthesized as large precursor molecule that undergoes proteolytic cleavage to generate an N-terminal propeptide and a disulfide linked C-terminal dimer, which is the biologically active molecule. The circulating form consists of a latent complex of the C-terminal dimer and other proteins, including its propeptide, which maintain the C-terminal dimer in a latent, inactive state. Ligand activation requires additional cleavage of the prodomain by a tolloid-like metalloproteinase.

It is found in the secreted. Its function is as follows. Acts specifically as a negative regulator of skeletal muscle growth. The polypeptide is Growth/differentiation factor 8 (MSTN) (Equus caballus (Horse)).